The primary structure comprises 187 residues: Phosphoheptose isomerase (187 aa).

One can recognise an SIS domain in the interval 34–187 (CIEALKNQKK…ILCSLIDESF (154 aa)). Substrate is bound at residue 49-51 (NGG). 2 residues coordinate Zn(2+): H58 and E62. Substrate-binding positions include E62, 91 to 92 (ND), 117 to 119 (STS), S122, and Q169. Zn(2+)-binding residues include Q169 and H177.

The protein belongs to the SIS family. GmhA subfamily. In terms of assembly, homotetramer. It depends on Zn(2+) as a cofactor.

The protein resides in the cytoplasm. The enzyme catalyses 2 D-sedoheptulose 7-phosphate = D-glycero-alpha-D-manno-heptose 7-phosphate + D-glycero-beta-D-manno-heptose 7-phosphate. The protein operates within carbohydrate biosynthesis; D-glycero-D-manno-heptose 7-phosphate biosynthesis; D-glycero-alpha-D-manno-heptose 7-phosphate and D-glycero-beta-D-manno-heptose 7-phosphate from sedoheptulose 7-phosphate: step 1/1. Functionally, catalyzes the isomerization of sedoheptulose 7-phosphate in D-glycero-D-manno-heptose 7-phosphate. The chain is Phosphoheptose isomerase from Nitratiruptor sp. (strain SB155-2).